The chain runs to 184 residues: C-phycoerythrin class 1 subunit beta (184 aa).

The (2R,3E)-phycoerythrobilin site is built by Cys-50 and Cys-61. Position 72 is an N4-methylasparagine (Asn-72). (2R,3E)-phycoerythrobilin contacts are provided by Cys-82 and Cys-165.

Belongs to the phycobiliprotein family. Heterodimer of an alpha and a beta chain. In terms of processing, contains three covalently linked bilin chromophores.

The protein resides in the cellular thylakoid membrane. Its function is as follows. Light-harvesting photosynthetic bile pigment-protein from the phycobiliprotein complex. This Synechococcus sp. (strain WH7803) protein is C-phycoerythrin class 1 subunit beta (cpeB).